The following is a 920-amino-acid chain: Vacuolar membrane protease (920 aa).

At 1-20 (MASSRAQRFNPIAFTPWPVT) the chain is on the cytoplasmic side. The chain crosses the membrane as a helical span at residues 21–41 (CITTIVYLALLIPILVINLVV). At 42–378 (PSAPETNPKG…AFAVFRLHTL (337 aa)) the chain is on the vacuolar side. Residues N53, N116, and N119 are each glycosylated (N-linked (GlcNAc...) asparagine). Zn(2+) contacts are provided by H175 and D187. E221 serves as the catalytic Proton acceptor. Position 222 (E222) interacts with Zn(2+). A glycan (N-linked (GlcNAc...) asparagine) is linked at N238. Zn(2+) contacts are provided by E247 and H306. Residues 379 to 399 (FAISVALLVIAPLVIFITSVI) form a helical membrane-spanning segment. Residues 400–433 (LSKTDRMYLFSMSKSLEGTGDQVSLRGLRGFSRT) lie on the Cytoplasmic side of the membrane. A helical transmembrane segment spans residues 434-454 (PIILVIATTIPICLAYLLEKV). Residues 455-463 (NPYIVHSSQ) are Vacuolar-facing. The helical transmembrane segment at 464–484 (FSVWSMMFSAWIFLAWFLACA) threads the bilayer. Residues 485–495 (ADFFRPSALHR) lie on the Cytoplasmic side of the membrane. The chain crosses the membrane as a helical span at residues 496 to 516 (AYSYTWIFVATWIMLVINTVY). At 517 to 520 (ANQK) the chain is on the vacuolar side. Residues 521-541 (GIAAGYFLLFYFAGAFLATWI) form a helical membrane-spanning segment. At 542-659 (SYLELFALPR…TLPRWTWVLQ (118 aa)) the chain is on the cytoplasmic side. The segment at 556 to 605 (ARQTTGRRPSSLSSRLLTSSADELRSNASPSTAEFPGAAGEDTDPTESTS) is disordered. Low complexity predominate over residues 559–575 (TTGRRPSSLSSRLLTSS). Residues 660–680 (LLLLAPIVLILVGQLALFLTA) traverse the membrane as a helical segment. Over 681-693 (SMCQVGSDGVSTF) the chain is Vacuolar. The helical transmembrane segment at 694–714 (VVYLACAVFTTLLCIPLFPLI) threads the bilayer. Residues 715–720 (HRFTYH) lie on the Cytoplasmic side of the membrane. The helical transmembrane segment at 721 to 741 (IPTFLFLVFIGTLIYNLVAFP) threads the bilayer. The Vacuolar segment spans residues 742 to 920 (FSPANRLKTF…VEASHSFTIQ (179 aa)). N-linked (GlcNAc...) asparagine glycans are attached at residues N760, N788, and N832.

The protein belongs to the peptidase M28 family. It depends on Zn(2+) as a cofactor.

It localises to the vacuole membrane. May be involved in vacuolar sorting and osmoregulation. The protein is Vacuolar membrane protease of Ajellomyces capsulatus (strain H143) (Darling's disease fungus).